We begin with the raw amino-acid sequence, 150 residues long: MGIQHEFDIIINGDIALRNLQLHRGDNYGCKLKIISNDYKKLKFRFIIRPDWSEIDEVKGLTVFANNYVVKVNKVDDTFYYVIYEAVIHLYNKKTEILIYSDDEKELFKHYYPYISLNMISKKYKVKEENYSSPYIEHPLIPYRDYESMD.

It belongs to the orthopoxvirus OPG027 family.

Functionally, inhibits antiviral activity induced by type I interferons. Does not block signal transduction of IFN, but is important to counteract the host antiviral state induced by a pre-treatment with IFN. The polypeptide is Probable host range protein 2 (OPG027) (Camelpox virus (strain M-96)).